We begin with the raw amino-acid sequence, 261 residues long: Pantothenate synthetase (261 aa).

Residue 29-36 (MGALHNGH) coordinates ATP. Catalysis depends on histidine 36, which acts as the Proton donor. Glutamine 60 is a binding site for (R)-pantoate. Glutamine 60 contacts beta-alanine. Residue 147-150 (GEKD) participates in ATP binding. Glutamine 153 contacts (R)-pantoate. 184 to 187 (LSSR) is an ATP binding site.

The protein belongs to the pantothenate synthetase family. As to quaternary structure, homodimer.

It localises to the cytoplasm. It catalyses the reaction (R)-pantoate + beta-alanine + ATP = (R)-pantothenate + AMP + diphosphate + H(+). The protein operates within cofactor biosynthesis; (R)-pantothenate biosynthesis; (R)-pantothenate from (R)-pantoate and beta-alanine: step 1/1. Functionally, catalyzes the condensation of pantoate with beta-alanine in an ATP-dependent reaction via a pantoyl-adenylate intermediate. This chain is Pantothenate synthetase, found in Francisella philomiragia subsp. philomiragia (strain ATCC 25017 / CCUG 19701 / FSC 153 / O#319-036).